Reading from the N-terminus, the 268-residue chain is Undecaprenyl-diphosphatase (268 aa).

The next 7 membrane-spanning stretches (helical) occupy residues 47 to 67 (FAVL…FAKL), 83 to 103 (FVIG…VAGS), 109 to 129 (LFNP…LLWV), 144 to 164 (FPLP…IPGV), 184 to 204 (AAEF…VYDF), 218 to 238 (IVAI…KTFL), and 246 to 266 (FELF…ALAM).

Belongs to the UppP family.

It localises to the cell inner membrane. The catalysed reaction is di-trans,octa-cis-undecaprenyl diphosphate + H2O = di-trans,octa-cis-undecaprenyl phosphate + phosphate + H(+). Functionally, catalyzes the dephosphorylation of undecaprenyl diphosphate (UPP). Confers resistance to bacitracin. The protein is Undecaprenyl-diphosphatase of Rhodopseudomonas palustris (strain BisB5).